The chain runs to 513 residues: Exoglucanase 1 (513 aa).

A signal peptide spans 1–17 (MYRKLAVISAFLATARA). The residue at position 18 (glutamine 18) is a Pyrrolidone carboxylic acid. The catalytic stretch occupies residues 18–453 (QSACTLQSET…GSTGNPSGGN (436 aa)). 10 cysteine pairs are disulfide-bonded: cysteine 21–cysteine 89, cysteine 36–cysteine 42, cysteine 67–cysteine 88, cysteine 78–cysteine 84, cysteine 155–cysteine 414, cysteine 189–cysteine 227, cysteine 193–cysteine 226, cysteine 247–cysteine 273, cysteine 255–cysteine 260, and cysteine 278–cysteine 348. A glycan (N-linked (GlcNAc) asparagine) is linked at asparagine 62. Glutamate 229 serves as the catalytic Nucleophile. The active-site Proton donor/acceptor is the glutamate 234. Residues asparagine 287 and asparagine 401 are each glycosylated (N-linked (GlcNAc) asparagine). Residues 401–437 (NETSSTPGAVRGSCSTSSGVPAQVESQSPNAKVTFSN) are compositionally biased toward polar residues. Positions 401–480 (NETSSTPGAV…TGSSPGPTQS (80 aa)) are disordered. The segment covering 449–459 (PSGGNPPGGNR) has biased composition (gly residues). The tract at residues 454 to 477 (PPGGNRGTTTTRRPATTTGSSPGP) is linker. The segment covering 460–478 (GTTTTRRPATTTGSSPGPT) has biased composition (low complexity). Residue threonine 461 is glycosylated (O-linked (Man) threonine). 3 O-linked (Man...) threonine glycosylation sites follow: threonine 462, threonine 463, and threonine 464. The O-linked (Man) threonine glycan is linked to threonine 469. Residues threonine 470 and threonine 471 are each glycosylated (O-linked (Man...) threonine). O-linked (Man) serine glycans are attached at residues serine 473 and serine 474. One can recognise a CBM1 domain in the interval 477–513 (PTQSHYGQCGGIGYSGPTVCASGTTCQVLNPYYSQCL). A glycan (O-linked (Man) threonine) is linked at threonine 478. 2 O-linked (Man) serine glycosylation sites follow: serine 480 and serine 491. Disulfide bonds link cysteine 485-cysteine 502 and cysteine 496-cysteine 512.

The protein belongs to the glycosyl hydrolase 7 (cellulase C) family. In terms of processing, N-glycosylated. The catalytic core domain comprises three N-linked glycans which each consist of a single N-acetylglucosamine residue. Post-translationally, O-glycosylated. Within the linker domain, all 8 threonines are variably glycosylated with between at least one, and up to three, mannose residues per site. All serines in this domain are at least partially glycosylated with a single mannose residue. O-glycosylation of the cellulase linker provides protection from proteolysis. Linker glycans also contribute to binding affinity of cellobiohydrolases to cellulose.

It localises to the secreted. The enzyme catalyses Hydrolysis of (1-&gt;4)-beta-D-glucosidic linkages in cellulose and cellotetraose, releasing cellobiose from the non-reducing ends of the chains.. Its function is as follows. Exocellobiohydrolases (CBH) that catalyzes the hydrolysis of 1,4-beta-D-glucosidic bonds in cellulose to release the disaccharide cellobiose. The degradation of cellulose involves an interplay between different cellulolytic enzymes. Hydrolysis starts with endoglucanases (EGs), which cut internal beta-1,4-glucosidic bonds in cellulose to reduce the polymerization degree of the substrate and create new chain ends for exocellobiohydrolases (CBHs). The CBHs release the disaccharide cellobiose from the non-reducing end of the cellulose polymer chain. Finally, beta-1,4-glucosidases hydrolyze the cellobiose and other short cello-oligosaccharides into glucose units. In Hypocrea jecorina (Trichoderma reesei), this protein is Exoglucanase 1 (cbh1).